The following is a 232-amino-acid chain: MANIGKRLSAARETFDRDTLYTIDDAVAHVKSNAKAKFDETIELAINLGVDPRHADQMVRGVCNLPNGTGRSVRVAVFAKGPKAEEATKAGADVVGAEDLMEQIQGGNINFDKVIATPDMMPLVGRLGKVLGPRGMMPNPKVGTVTMGVTKAVNDSKGGAVEFRVEKAGIIHAGVGKASFTEAALAENVRALVDAIVKAKPSGAKGLYVRRIALSSTMGPGVKIDTSAAVSA.

Belongs to the universal ribosomal protein uL1 family. Part of the 50S ribosomal subunit.

Its function is as follows. Binds directly to 23S rRNA. The L1 stalk is quite mobile in the ribosome, and is involved in E site tRNA release. Functionally, protein L1 is also a translational repressor protein, it controls the translation of the L11 operon by binding to its mRNA. In Maricaulis maris (strain MCS10) (Caulobacter maris), this protein is Large ribosomal subunit protein uL1.